The sequence spans 190 residues: Protein GrpE (190 aa).

2 disordered regions span residues Met1–Ile22 and Glu170–Ser190. Residues Ala181–Ser190 show a composition bias toward basic residues.

This sequence belongs to the GrpE family. As to quaternary structure, homodimer.

It is found in the cytoplasm. Participates actively in the response to hyperosmotic and heat shock by preventing the aggregation of stress-denatured proteins, in association with DnaK and GrpE. It is the nucleotide exchange factor for DnaK and may function as a thermosensor. Unfolded proteins bind initially to DnaJ; upon interaction with the DnaJ-bound protein, DnaK hydrolyzes its bound ATP, resulting in the formation of a stable complex. GrpE releases ADP from DnaK; ATP binding to DnaK triggers the release of the substrate protein, thus completing the reaction cycle. Several rounds of ATP-dependent interactions between DnaJ, DnaK and GrpE are required for fully efficient folding. The sequence is that of Protein GrpE from Leptospira biflexa serovar Patoc (strain Patoc 1 / Ames).